Consider the following 156-residue polypeptide: Small ribosomal subunit protein uS7 (156 aa).

This sequence belongs to the universal ribosomal protein uS7 family. In terms of assembly, part of the 30S ribosomal subunit. Contacts proteins S9 and S11.

One of the primary rRNA binding proteins, it binds directly to 16S rRNA where it nucleates assembly of the head domain of the 30S subunit. Is located at the subunit interface close to the decoding center, probably blocks exit of the E-site tRNA. This is Small ribosomal subunit protein uS7 from Parasynechococcus marenigrum (strain WH8102).